Consider the following 194-residue polypeptide: Small ribosomal subunit protein uS7 (194 aa).

The protein belongs to the universal ribosomal protein uS7 family. As to quaternary structure, part of the 30S ribosomal subunit.

Functionally, one of the primary rRNA binding proteins, it binds directly to 16S rRNA where it nucleates assembly of the head domain of the 30S subunit. Is located at the subunit interface close to the decoding center. This is Small ribosomal subunit protein uS7 from Methanocorpusculum labreanum (strain ATCC 43576 / DSM 4855 / Z).